We begin with the raw amino-acid sequence, 441 residues long: 5-methylthioadenosine/S-adenosylhomocysteine deaminase (441 aa).

His70 and His72 together coordinate Zn(2+). Substrate contacts are provided by Glu99 and His191. His218 is a binding site for Zn(2+). 2 residues coordinate substrate: Glu221 and Asp306. Zn(2+) is bound at residue Asp306.

Belongs to the metallo-dependent hydrolases superfamily. MTA/SAH deaminase family. Zn(2+) is required as a cofactor.

It carries out the reaction S-adenosyl-L-homocysteine + H2O + H(+) = S-inosyl-L-homocysteine + NH4(+). It catalyses the reaction S-methyl-5'-thioadenosine + H2O + H(+) = S-methyl-5'-thioinosine + NH4(+). In terms of biological role, catalyzes the deamination of 5-methylthioadenosine and S-adenosyl-L-homocysteine into 5-methylthioinosine and S-inosyl-L-homocysteine, respectively. Is also able to deaminate adenosine. In Lawsonia intracellularis (strain PHE/MN1-00), this protein is 5-methylthioadenosine/S-adenosylhomocysteine deaminase.